Here is a 186-residue protein sequence, read N- to C-terminus: Small ribosomal subunit protein uS5 (186 aa).

Residues 18 to 81 (FVDKLVHINR…EAAKRAMIRV (64 aa)) form the S5 DRBM domain.

This sequence belongs to the universal ribosomal protein uS5 family. In terms of assembly, part of the 30S ribosomal subunit. Contacts proteins S4 and S8.

Functionally, with S4 and S12 plays an important role in translational accuracy. In terms of biological role, located at the back of the 30S subunit body where it stabilizes the conformation of the head with respect to the body. The protein is Small ribosomal subunit protein uS5 of Parvibaculum lavamentivorans (strain DS-1 / DSM 13023 / NCIMB 13966).